The following is a 265-amino-acid chain: Indole-3-glycerol phosphate synthase (265 aa).

Belongs to the TrpC family.

The catalysed reaction is 1-(2-carboxyphenylamino)-1-deoxy-D-ribulose 5-phosphate + H(+) = (1S,2R)-1-C-(indol-3-yl)glycerol 3-phosphate + CO2 + H2O. It functions in the pathway amino-acid biosynthesis; L-tryptophan biosynthesis; L-tryptophan from chorismate: step 4/5. In Xanthomonas campestris pv. campestris (strain 8004), this protein is Indole-3-glycerol phosphate synthase.